A 436-amino-acid polypeptide reads, in one-letter code: Protein translocase subunit SecY (436 aa).

10 consecutive transmembrane segments (helical) span residues 18 to 38 (IAFT…PATG), 69 to 89 (LLQV…SIIV), 116 to 138 (YTRY…LART), 154 to 174 (ILTV…VMWF), 187 to 207 (MSLL…GQVV), 214 to 234 (VFAI…FVEE), 266 to 286 (MANV…GILI), 314 to 334 (PVYM…YVSI), 375 to 395 (VVGA…FAVI), and 396 to 416 (GTSQ…GVGL).

Belongs to the SecY/SEC61-alpha family. Component of the Sec protein translocase complex. Heterotrimer consisting of SecY, SecE and SecG subunits. The heterotrimers can form oligomers, although 1 heterotrimer is thought to be able to translocate proteins. Interacts with the ribosome. Interacts with SecDF, and other proteins may be involved. Interacts with SecA.

The protein localises to the cell membrane. In terms of biological role, the central subunit of the protein translocation channel SecYEG. Consists of two halves formed by TMs 1-5 and 6-10. These two domains form a lateral gate at the front which open onto the bilayer between TMs 2 and 7, and are clamped together by SecE at the back. The channel is closed by both a pore ring composed of hydrophobic SecY resides and a short helix (helix 2A) on the extracellular side of the membrane which forms a plug. The plug probably moves laterally to allow the channel to open. The ring and the pore may move independently. This chain is Protein translocase subunit SecY, found in Micrococcus luteus (Micrococcus lysodeikticus).